The chain runs to 76 residues: Protein OPG128 (76 aa).

The cysteines at positions 17 and 21 are disulfide-linked.

It belongs to the orthopoxvirus OPG128 family. In terms of assembly, interacts with sulfhydryl oxidase OPG072; this interaction involves formation of a transient disulfide-bonded intermediate, allowing disulfide bond transfer. Interacts with OPG088; this interaction involves formation of a transient disulfide-bonded intermediate, allowing disulfide bond transfer.

In terms of biological role, late protein which probably participates in disulfide bond formation by functioning as a thiol-disulfide transfer protein between membrane-associated OPG072 and OPG08. The complete pathway for formation of disulfide bonds in intracellular virion membrane proteins sequentially involves oxidation of OPG072, OPG128 and OPG08. The polypeptide is Protein OPG128 (OPG128) (Bos taurus (Bovine)).